The following is a 417-amino-acid chain: Phosphatidylcholine:ceramide cholinephosphotransferase 1 (417 aa).

The SAM domain maps to 11–74; that stretch reads WSPEEVTNWL…LHMIETLKMA (64 aa). The next 5 helical transmembrane spans lie at 140–160, 188–208, 219–239, 280–300, and 308–328; these read FLAFIYALFCFIFTTVTISVV, FSICEINGMILVGLWLVQWLL, FFCIVCTLYLYRCITMYVTTL, MCGDYLYSGHTVILTLTYLFI, and LWWYHWLCWTLSMVGMFCILL. His289 is a catalytic residue. Residues 329 to 417 lie on the Cytoplasmic side of the membrane; it reads AHDHYTVDVV…VKYSRLVNDT (89 aa). Active-site residues include His332 and Asp336.

The protein belongs to the sphingomyelin synthase family.

The protein localises to the golgi apparatus membrane. It catalyses the reaction an N-acylsphing-4-enine + a 1,2-diacyl-sn-glycero-3-phosphocholine = a sphingomyelin + a 1,2-diacyl-sn-glycerol. The enzyme catalyses an N-acylsphing-4-enine + a 1,2-diacyl-sn-glycero-3-phosphoethanolamine = an N-acylsphing-4-enine 1-phosphoethanolamine + a 1,2-diacyl-sn-glycerol. In terms of biological role, major sphingomyelin synthase at the Golgi apparatus. Catalyzes the reversible transfer of phosphocholine moiety in sphingomyelin biosynthesis: in the forward reaction transfers phosphocholine head group of phosphatidylcholine (PC) on to ceramide (CER) to form ceramide phosphocholine (sphingomyelin, SM) and diacylglycerol (DAG) as by-product, and in the reverse reaction transfers phosphocholine from SM to DAG to form PC and CER. The direction of the reaction depends on the levels of CER and DAG in Golgi membranes. Converts the newly synthesized CER, that is transported from the endoplasmic reticulum to the trans-Golgi by the Cer transport protein (CERT), to SM. Can form a heteromeric complex with glucosylceramide synthase (GCS) increasing SMS activity and reducing glucosylceramide synthesis, a critical mechanism that controls the metabolic fate of CER in the Golgi. Does not use free phosphorylcholine or CDP-choline as donor. Can also transfer phosphoethanolamine head group of phosphatidylethanolamine (PE) on to CER to form ceramide phosphoethanolamine (CPE). Regulates receptor-mediated signal transduction via mitogenic DAG and proapoptotic CER, as well as via SM, a structural component of membrane rafts that serve as platforms for signal transduction and protein sorting. Plays a role in secretory transport via regulation of DAG pool at the Golgi apparatus and its downstream effects on PRKD1. This chain is Phosphatidylcholine:ceramide cholinephosphotransferase 1 (SGMS1), found in Gallus gallus (Chicken).